Consider the following 170-residue polypeptide: Large ribosomal subunit protein uL5 (170 aa).

The protein belongs to the universal ribosomal protein uL5 family. As to quaternary structure, component of the large ribosomal subunit.

Its subcellular location is the nucleus. It localises to the cytoplasm. In terms of biological role, component of the ribosome, a large ribonucleoprotein complex responsible for the synthesis of proteins in the cell. The small ribosomal subunit (SSU) binds messenger RNAs (mRNAs) and translates the encoded message by selecting cognate aminoacyl-transfer RNA (tRNA) molecules. The large subunit (LSU) contains the ribosomal catalytic site termed the peptidyl transferase center (PTC), which catalyzes the formation of peptide bonds, thereby polymerizing the amino acids delivered by tRNAs into a polypeptide chain. The nascent polypeptides leave the ribosome through a tunnel in the LSU and interact with protein factors that function in enzymatic processing, targeting, and the membrane insertion of nascent chains at the exit of the ribosomal tunnel. This is Large ribosomal subunit protein uL5 (RPL11) from Chlamydomonas reinhardtii (Chlamydomonas smithii).